Reading from the N-terminus, the 487-residue chain is Serine/threonine-protein kinase 4 (487 aa).

Residue methionine 1 is modified to N-acetylmethionine. Position 3 is a phosphothreonine (threonine 3). The Protein kinase domain occupies 30-281; the sequence is FDVLEKLGEG…ATQLLQHPFV (252 aa). ATP-binding positions include 36-44 and lysine 59; that span reads LGEGSYGSV. Residue aspartate 149 is the Proton acceptor of the active site. Residue threonine 183 is modified to Phosphothreonine; by autocatalysis. Residue serine 265 is modified to Phosphoserine. The stretch at 290-310 forms a coiled coil; the sequence is LRDLINEAMDVKLKRQESQQR. Residues 303-312 show a composition bias toward basic and acidic residues; sequence KRQESQQREV. Positions 303 to 332 are disordered; that stretch reads KRQESQQREVDQDDEENSEEDEMDSGTMVR. Over residues 313–326 the composition is skewed to acidic residues; that stretch reads DQDDEENSEEDEMD. Serine 320 is modified (phosphoserine). Phosphothreonine is present on residues threonine 340 and threonine 367. The residue at position 387 (threonine 387) is a Phosphothreonine; by PKB/AKT1. Serine 410 and serine 414 each carry phosphoserine. Tyrosine 433 carries the post-translational modification Phosphotyrosine. The SARAH domain occupies 433-480; the sequence is YEFLKSWTVEDLQKRLLALDPMMEQEIEEIRQKYQSKRQPILDAIEAK.

The protein belongs to the protein kinase superfamily. STE Ser/Thr protein kinase family. STE20 subfamily. As to quaternary structure, homodimer; mediated via the coiled-coil region. Interacts with NORE1, which inhibits autoactivation. Interacts with and stabilizes SAV1. Interacts with RASSF1. Interacts with FOXO3. Interacts with RASSF2 (via SARAH domain). Interacts with AR, PKB/AKT1, TNNI3 and SIRT1. Interacts with DLG5 (via PDZ domain 3). Interacts with MARK3 in the presence of DLG5. Interacts with SCRIB in the presence of DLG5. Requires Mg(2+) as cofactor. Post-translationally, autophosphorylated on serine and threonine residues. Phosphorylation at Thr-387 by PKB/AKT1, leads to inhibition of its: kinase activity, nuclear translocation and autophosphorylation at Thr-183. It also diminishes its cleavage by caspases and its ability to phosphorylate FOXO3. In terms of processing, proteolytically cleaved by caspase-3 during apoptosis at Asp-326 and Asp-349 resulting in a 37 kDa or a 39 kDa subunit respectively. The 39 kDa subunit is further cleaved into the 37 kDa form. Proteolytic cleavage results in kinase activation and nuclear translocation of the truncated form (MST1/N). It is less likely that cleavage at Asp-349 is a prerequisite for activation as this site is not conserved in the murine ortholog. Expressed in prostate cancer and levels increase from the normal to the malignant state (at protein level). Ubiquitously expressed.

It is found in the cytoplasm. Its subcellular location is the nucleus. It catalyses the reaction L-seryl-[protein] + ATP = O-phospho-L-seryl-[protein] + ADP + H(+). The catalysed reaction is L-threonyl-[protein] + ATP = O-phospho-L-threonyl-[protein] + ADP + H(+). With respect to regulation, inhibited by the C-terminal non-catalytic region. Activated by caspase-cleavage. Full activation also requires homodimerization and autophosphorylation of Thr-183. Activated by RASSF1 which acts by preventing its dephosphorylation. Its function is as follows. Stress-activated, pro-apoptotic kinase which, following caspase-cleavage, enters the nucleus and induces chromatin condensation followed by internucleosomal DNA fragmentation. Key component of the Hippo signaling pathway which plays a pivotal role in organ size control and tumor suppression by restricting proliferation and promoting apoptosis. The core of this pathway is composed of a kinase cascade wherein STK3/MST2 and STK4/MST1, in complex with its regulatory protein SAV1, phosphorylates and activates LATS1/2 in complex with its regulatory protein MOB1, which in turn phosphorylates and inactivates YAP1 oncoprotein and WWTR1/TAZ. Phosphorylation of YAP1 by LATS2 inhibits its translocation into the nucleus to regulate cellular genes important for cell proliferation, cell death, and cell migration. STK3/MST2 and STK4/MST1 are required to repress proliferation of mature hepatocytes, to prevent activation of facultative adult liver stem cells (oval cells), and to inhibit tumor formation. Phosphorylates 'Ser-14' of histone H2B (H2BS14ph) during apoptosis. Phosphorylates FOXO3 upon oxidative stress, which results in its nuclear translocation and cell death initiation. Phosphorylates MOBKL1A, MOBKL1B and RASSF2. Phosphorylates TNNI3 (cardiac Tn-I) and alters its binding affinity to TNNC1 (cardiac Tn-C) and TNNT2 (cardiac Tn-T). Phosphorylates FOXO1 on 'Ser-212' and regulates its activation and stimulates transcription of PMAIP1 in a FOXO1-dependent manner. Phosphorylates SIRT1 and inhibits SIRT1-mediated p53/TP53 deacetylation, thereby promoting p53/TP53 dependent transcription and apoptosis upon DNA damage. Acts as an inhibitor of PKB/AKT1. Phosphorylates AR on 'Ser-650' and suppresses its activity by intersecting with PKB/AKT1 signaling and antagonizing formation of AR-chromatin complexes. This Homo sapiens (Human) protein is Serine/threonine-protein kinase 4.